A 237-amino-acid polypeptide reads, in one-letter code: uncharacterized protein (237 aa).

Residue 50–57 (APPGTGKS) coordinates ATP.

This is an uncharacterized protein from Escherichia coli (strain K12).